We begin with the raw amino-acid sequence, 331 residues long: Ornithine carbamoyltransferase (331 aa).

Carbamoyl phosphate is bound by residues 55 to 58, glutamine 82, arginine 106, and 133 to 136; these read STRT and HPTQ. Residues asparagine 166, aspartate 230, and 234–235 each bind L-ornithine; that span reads SM. Residues 272–273 and arginine 317 each bind carbamoyl phosphate; that span reads CL.

This sequence belongs to the aspartate/ornithine carbamoyltransferase superfamily. OTCase family.

Its subcellular location is the cytoplasm. It carries out the reaction carbamoyl phosphate + L-ornithine = L-citrulline + phosphate + H(+). It functions in the pathway amino-acid biosynthesis; L-arginine biosynthesis; L-arginine from L-ornithine and carbamoyl phosphate: step 1/3. Functionally, reversibly catalyzes the transfer of the carbamoyl group from carbamoyl phosphate (CP) to the N(epsilon) atom of ornithine (ORN) to produce L-citrulline. In Neisseria gonorrhoeae (strain ATCC 700825 / FA 1090), this protein is Ornithine carbamoyltransferase.